Reading from the N-terminus, the 575-residue chain is Hemagglutinin-neuraminidase (575 aa).

The segment covering 1 to 10 has biased composition (basic and acidic residues); it reads MDGDRSKRDS. Residues 1–25 form a disordered region; the sequence is MDGDRSKRDSYWSTSPGGSTTKLVS. Topologically, residues 1–37 are intravirion; it reads MDGDRSKRDSYWSTSPGGSTTKLVSDSERSGKVDTWL. The segment at 10-14 is incorporation in virion; that stretch reads SYWST. Positions 11–24 are enriched in polar residues; the sequence is YWSTSPGGSTTKLV. Residues 38–58 form a helical membrane-spanning segment; the sequence is LILAFTQWALSIATVIICIVI. The segment at 59–140 is involved in interaction with F protein; the sequence is AARQGYSMER…RQELTQLCDS (82 aa). Residues 59–575 are Virion surface-facing; that stretch reads AARQGYSMER…SIPKLCKAES (517 aa). Asparagine 77 carries an N-linked (GlcNAc...) asparagine; by host glycan. 4 disulfide bridges follow: cysteine 192–cysteine 216, cysteine 258–cysteine 271, cysteine 357–cysteine 469, and cysteine 463–cysteine 473. Residues 254-259 form an involved in neuraminidase activity region; that stretch reads NRKSCS. N-linked (GlcNAc...) asparagine; by host glycosylation is found at asparagine 499 and asparagine 511. Cysteine 535 and cysteine 544 are joined by a disulfide.

This sequence belongs to the paramyxoviruses hemagglutinin-neuraminidase family. In terms of assembly, homotetramer; composed of disulfide-linked homodimers. Interacts with F protein trimer. Post-translationally, N-glycosylated; glycans consist of a mixture of high mannose-type oligosaccharides and of complex-type oligosaccharides.

Its subcellular location is the virion membrane. The protein resides in the host cell membrane. It catalyses the reaction Hydrolysis of alpha-(2-&gt;3)-, alpha-(2-&gt;6)-, alpha-(2-&gt;8)- glycosidic linkages of terminal sialic acid residues in oligosaccharides, glycoproteins, glycolipids, colominic acid and synthetic substrates.. Functionally, attaches the virus to sialic acid-containing cell receptors and thereby initiating infection. Binding of HN protein to the receptor induces a conformational change that allows the F protein to trigger virion/cell membranes fusion. In terms of biological role, neuraminidase activity ensures the efficient spread of the virus by dissociating the mature virions from the neuraminic acid containing glycoproteins. In Cavia cutleri (Guinea pig), this protein is Hemagglutinin-neuraminidase (HN).